We begin with the raw amino-acid sequence, 316 residues long: Beta-ketoacyl-[acyl-carrier-protein] synthase III 4 (316 aa).

Residues cysteine 114 and histidine 242 contribute to the active site. The segment at 243–247 (QANLR) is ACP-binding. Residue asparagine 272 is part of the active site.

It belongs to the thiolase-like superfamily. FabH family. In terms of assembly, homodimer.

The protein localises to the cytoplasm. The catalysed reaction is malonyl-[ACP] + acetyl-CoA + H(+) = 3-oxobutanoyl-[ACP] + CO2 + CoA. It participates in lipid metabolism; fatty acid biosynthesis. Its function is as follows. Catalyzes the condensation reaction of fatty acid synthesis by the addition to an acyl acceptor of two carbons from malonyl-ACP. Catalyzes the first condensation reaction which initiates fatty acid synthesis and may therefore play a role in governing the total rate of fatty acid production. Possesses both acetoacetyl-ACP synthase and acetyl transacylase activities. Its substrate specificity determines the biosynthesis of branched-chain and/or straight-chain of fatty acids. This Streptomyces coelicolor (strain ATCC BAA-471 / A3(2) / M145) protein is Beta-ketoacyl-[acyl-carrier-protein] synthase III 4.